The chain runs to 140 residues: Large-conductance mechanosensitive channel (140 aa).

2 consecutive transmembrane segments (helical) span residues V16 to L36 and I84 to I104.

This sequence belongs to the MscL family. Homopentamer.

It localises to the cell inner membrane. Its function is as follows. Channel that opens in response to stretch forces in the membrane lipid bilayer. May participate in the regulation of osmotic pressure changes within the cell. The chain is Large-conductance mechanosensitive channel from Xanthomonas oryzae pv. oryzae (strain PXO99A).